The primary structure comprises 428 residues: 3-phosphoshikimate 1-carboxyvinyltransferase (428 aa).

Lysine 21, serine 22, and arginine 26 together coordinate 3-phosphoshikimate. Residue lysine 21 participates in phosphoenolpyruvate binding. Residues glycine 93 and arginine 121 each coordinate phosphoenolpyruvate. 3-phosphoshikimate-binding residues include serine 166, glutamine 168, aspartate 314, and lysine 341. Residue glutamine 168 coordinates phosphoenolpyruvate. Residue aspartate 314 is the Proton acceptor of the active site. Arginine 345 and arginine 388 together coordinate phosphoenolpyruvate.

This sequence belongs to the EPSP synthase family. As to quaternary structure, monomer.

The protein resides in the cytoplasm. It carries out the reaction 3-phosphoshikimate + phosphoenolpyruvate = 5-O-(1-carboxyvinyl)-3-phosphoshikimate + phosphate. It participates in metabolic intermediate biosynthesis; chorismate biosynthesis; chorismate from D-erythrose 4-phosphate and phosphoenolpyruvate: step 6/7. Functionally, catalyzes the transfer of the enolpyruvyl moiety of phosphoenolpyruvate (PEP) to the 5-hydroxyl of shikimate-3-phosphate (S3P) to produce enolpyruvyl shikimate-3-phosphate and inorganic phosphate. The polypeptide is 3-phosphoshikimate 1-carboxyvinyltransferase (Syntrophomonas wolfei subsp. wolfei (strain DSM 2245B / Goettingen)).